Here is a 271-residue protein sequence, read N- to C-terminus: Insulin-like growth factor-binding protein 5 (271 aa).

Positions 1–19 (MVLTAVLLLLAACAGSAQG) are cleaved as a signal peptide. In terms of domain architecture, IGFBP N-terminal spans 22–102 (SFVHCEPCDE…LHGRGVCLNE (81 aa)). Intrachain disulfides connect Cys26–Cys52, Cys29–Cys54, Cys37–Cys55, Cys44–Cys58, Cys66–Cys79, and Cys73–Cys99. Residues 109-121 (AKIERDSREHEEP) show a composition bias toward basic and acidic residues. Residues 109–129 (AKIERDSREHEEPTTSEMAEE) form a disordered region. Ser115 is modified (phosphoserine). A Thyroglobulin type-1 domain is found at 188–262 (QGPCRRHMEA…MEYVDGDFQC (75 aa)). 3 disulfides stabilise this stretch: Cys191/Cys218, Cys229/Cys240, and Cys242/Cys262.

In terms of assembly, interacts with IGF1; this interaction enhances the growth stimulatory effects of IGF1 on fibroblasts. Interacts with CAV1; this interaction allows trafficking of IGFBP5 from the plasma membrane to the nucleus. Interacts with NCL; this interaction is necessary for IGFBP5 localization to the nucleus.

The protein localises to the secreted. The protein resides in the cytoplasm. Its subcellular location is the nucleus. Functionally, multifunctional protein that plays a critical role in regulating the availability of IGFs to their receptors and thereby regulates IGF-mediated cellular processes including proliferation, differentiation, and apoptosis in a cell-type specific manner. Increases the cell proliferation of osteoblasts, intestinal smooth muscle cells and neuroblastoma cells. Enhances adhesion and survival of epithelial cells but decreases adhesion of mesenchymal cells. Once secreted, acts as a major mediator of mTORC1-dependent feedback inhibition of IGF1 signaling. Also plays a role in the induction of extracellular matrix (ECM) production and deposition independently of its nuclear translocation and binding to IGFs. Acts itself as a growth factor that can act independently of IGFs to regulate bone formation. Acts as a ligand for the ROR1 receptor which triggers formation of ROR1/HER2 heterodimer to enhance CREB oncogenic signaling. This chain is Insulin-like growth factor-binding protein 5 (IGFBP5), found in Bos taurus (Bovine).